The chain runs to 263 residues: ATP synthase subunit delta (263 aa).

It belongs to the ATPase delta chain family. In terms of assembly, F-type ATPases have 2 components, F(1) - the catalytic core - and F(0) - the membrane proton channel. F(1) has five subunits: alpha(3), beta(3), gamma(1), delta(1), epsilon(1). F(0) has three main subunits: a(1), b(2) and c(10-14). The alpha and beta chains form an alternating ring which encloses part of the gamma chain. F(1) is attached to F(0) by a central stalk formed by the gamma and epsilon chains, while a peripheral stalk is formed by the delta and b chains.

The protein localises to the cell membrane. F(1)F(0) ATP synthase produces ATP from ADP in the presence of a proton or sodium gradient. F-type ATPases consist of two structural domains, F(1) containing the extramembraneous catalytic core and F(0) containing the membrane proton channel, linked together by a central stalk and a peripheral stalk. During catalysis, ATP synthesis in the catalytic domain of F(1) is coupled via a rotary mechanism of the central stalk subunits to proton translocation. Its function is as follows. This protein is part of the stalk that links CF(0) to CF(1). It either transmits conformational changes from CF(0) to CF(1) or is implicated in proton conduction. The protein is ATP synthase subunit delta of Cutibacterium acnes (strain DSM 16379 / KPA171202) (Propionibacterium acnes).